We begin with the raw amino-acid sequence, 199 residues long: Nuclear protein UL4 (199 aa).

Belongs to the alphaherpesvirinae HHV-1 UL4 family.

It localises to the host nucleus. In Homo sapiens (Human), this protein is Nuclear protein UL4.